A 190-amino-acid polypeptide reads, in one-letter code: Holliday junction branch migration complex subunit RuvA (190 aa).

The domain I stretch occupies residues 1–64 (MIGKLTGTLL…EDAQLLYGFG (64 aa)). The segment at 65–137 (TAQERQAFRE…LKGKLGADVG (73 aa)) is domain II. The segment at 137 to 141 (GVRAH) is flexible linker. The domain III stretch occupies residues 142 to 190 (AANDNQADILQALLALGYNDKEAAAALKALPADVGVSEGIKLALKSLSK).

This sequence belongs to the RuvA family. Homotetramer. Forms an RuvA(8)-RuvB(12)-Holliday junction (HJ) complex. HJ DNA is sandwiched between 2 RuvA tetramers; dsDNA enters through RuvA and exits via RuvB. An RuvB hexamer assembles on each DNA strand where it exits the tetramer. Each RuvB hexamer is contacted by two RuvA subunits (via domain III) on 2 adjacent RuvB subunits; this complex drives branch migration. In the full resolvosome a probable DNA-RuvA(4)-RuvB(12)-RuvC(2) complex forms which resolves the HJ.

Its subcellular location is the cytoplasm. Its function is as follows. The RuvA-RuvB-RuvC complex processes Holliday junction (HJ) DNA during genetic recombination and DNA repair, while the RuvA-RuvB complex plays an important role in the rescue of blocked DNA replication forks via replication fork reversal (RFR). RuvA specifically binds to HJ cruciform DNA, conferring on it an open structure. The RuvB hexamer acts as an ATP-dependent pump, pulling dsDNA into and through the RuvAB complex. HJ branch migration allows RuvC to scan DNA until it finds its consensus sequence, where it cleaves and resolves the cruciform DNA. This Acidovorax ebreus (strain TPSY) (Diaphorobacter sp. (strain TPSY)) protein is Holliday junction branch migration complex subunit RuvA.